A 308-amino-acid polypeptide reads, in one-letter code: Nodulation protein D 1 (308 aa).

The HTH lysR-type domain occupies 6-63; the sequence is LDLNLLVALDALMTERNLTAAARSINLSQPAMSAAVGRLRVYFEDELFTMNGRELVLT. Positions 23-42 form a DNA-binding region, H-T-H motif; that stretch reads LTAAARSINLSQPAMSAAVG.

It belongs to the LysR transcriptional regulatory family.

Functionally, nodD regulates the expression of the nodABCFE genes which encode other nodulation proteins. NodD is also a negative regulator of its own expression. Binds flavonoids as inducers. The polypeptide is Nodulation protein D 1 (nodD1) (Rhizobium tropici).